The sequence spans 729 residues: Ran-binding protein 9 (729 aa).

A compositionally biased stretch (pro residues) spans 1-11 (MSGQPPPPPPQ). The interval 1-137 (MSGQPPPPPP…SAAAPFPHGD (137 aa)) is disordered. The span at 27–49 (LAPVSGVVLPAPPAVSAGSSPAG) shows a compositional bias: low complexity. Over residues 50–60 (SPGGGAGGEGL) the composition is skewed to gly residues. Over residues 70–93 (HPPPPPPPATAAPPPPPPPPPPPA) the composition is skewed to pro residues. The segment covering 107 to 126 (GLAAGPGPAGGAPTPALVAG) has biased composition (low complexity). Residues 147-334 (LQRRLKRLYP…VDANFGQHPF (188 aa)) form the B30.2/SPRY domain. The LisH domain maps to 365-397 (WQTMIQKMVSSYLVHHGYCATAEAFARSTDQTV). The segment at 401–407 (LASIKNR) is interaction with CALB1. Residues 403–460 (SIKNRQRIQKLVLAGRMGEAIETTQQLYPSLLERNPNLLFTLKVRQFIEMVNGTDSEV) form the CTLH domain. Lys-405 is subject to N6-acetyllysine. Residues 461 to 489 (RCLGGRSPKSQDSYPVSPRPFSSPSMSPS) are disordered. Residues 473-489 (SYPVSPRPFSSPSMSPS) are compositionally biased toward low complexity. Ser-477 and Ser-487 each carry phosphoserine. The interval 615 to 729 (AAIERMIHFG…AFATVEDYLH (115 aa)) is interaction with FMR1.

The protein belongs to the RANBP9/10 family. As to quaternary structure, part of a complex consisting of RANBP9, MKLN1 and GID8. Identified in the CTLH complex that contains GID4, RANBP9 and/or RANBP10, MKLN1, MAEA, RMND5A (or alternatively its paralog RMND5B), GID8, ARMC8, WDR26 and YPEL5. Within this complex, MAEA, RMND5A (or alternatively its paralog RMND5B), GID8, WDR26, and RANBP9 and/or RANBP10 form the catalytic core, while GID4, MKLN1, ARMC8 and YPEL5 have ancillary roles. Interacts with GTP-bound Ran, AR, CDC2L1/p110C, CALB1, S100A7, USP11, MKLN1, SOS1 or SOS2, GID8, and FMR1. Interacts with the Dyrk kinases HIPK2, DYRK1A, and DYRK1B. Interacts with TP73 isoform Alpha but not with TP53. Interacts with the HGF receptor MET and the integrins ITGB1 and ITGB2, but not with ITGAL. Part of a complex consisting of RANBP9, RAN, DYRK1B and COPS5. Directly interacts with RANBP10. Interacts with YPEL5. Interacts with DDX4. Interacts with NGFR. Interacts with TEX19. In terms of processing, phosphorylated in response to stress. Can be phosphorylated by the cleaved p110 form of CDC2L1 (p110C). Post-translationally, ubiquitinated. Polyubiquitination targets the protein for rapid degradation via the ubiquitin system. Can be deubiquitinated by USP11. In terms of tissue distribution, ubiquitously expressed, with highest levels in testes, placenta, heart, and muscle, and lowest levels in lung. Within the brain, expressed predominantly by neurons in the gray matter of cortex, the granular layer of cerebellum and the Purkinje cells.

It localises to the cytoplasm. Its subcellular location is the nucleus. The protein localises to the cell membrane. Functionally, may act as scaffolding protein, and as adapter protein to couple membrane receptors to intracellular signaling pathways. Acts as a mediator of cell spreading and actin cytoskeleton rearrangement. Core component of the CTLH E3 ubiquitin-protein ligase complex that selectively accepts ubiquitin from UBE2H and mediates ubiquitination and subsequent proteasomal degradation of the transcription factor HBP1. May be involved in signaling of ITGB2/LFA-1 and other integrins. Enhances HGF-MET signaling by recruiting Sos and activating the Ras pathway. Enhances dihydrotestosterone-induced transactivation activity of AR, as well as dexamethasone-induced transactivation activity of NR3C1, but not affect estrogen-induced transactivation. Stabilizes TP73 isoform Alpha, probably by inhibiting its ubiquitination, and increases its proapoptotic activity. Inhibits the kinase activity of DYRK1A and DYRK1B. Inhibits FMR1 binding to RNA. This is Ran-binding protein 9 (RANBP9) from Homo sapiens (Human).